A 389-amino-acid polypeptide reads, in one-letter code: RHOMBOID-like protein 1 (389 aa).

A run of 7 helical transmembrane segments spans residues 56–76 (PWLV…SMFI), 136–156 (IWLH…IFIG), 163–183 (FGFV…SLLS), 191–211 (ISVG…SELL), 221–241 (FAAL…GILP), 244–264 (DNFA…VFLI), and 295–315 (VLWI…LVVL). Ser196 acts as the Nucleophile in catalysis. His248 serves as the catalytic Charge relay system.

The protein belongs to the peptidase S54 family. In terms of tissue distribution, expressed in roots, seedlings, leaves, stems and flowers.

It localises to the golgi apparatus membrane. The enzyme catalyses Cleaves type-1 transmembrane domains using a catalytic dyad composed of serine and histidine that are contributed by different transmembrane domains.. Functionally, probable rhomboid-type serine protease that catalyzes intramembrane proteolysis. Unable to cleave the Drosophila protein Spitz. The chain is RHOMBOID-like protein 1 from Arabidopsis thaliana (Mouse-ear cress).